A 373-amino-acid polypeptide reads, in one-letter code: Ferroptosis suppressor protein 1 (373 aa).

A lipid anchor (N-myristoyl glycine) is attached at Gly2. The helical transmembrane segment at 13 to 29 (VVVVGGGFGGTAAASLL) threads the bilayer. 6-hydroxy-FAD-binding positions include 17–21 (GGGFG), Arg53, and Val81. Lys167 is modified (N6-acetyllysine). 6-hydroxy-FAD is bound at residue Asp284.

It belongs to the FAD-dependent oxidoreductase family. Requires 6-hydroxy-FAD as cofactor. N-myristoylation at Gly-2 mediates the recruitment to lipid droplets and plasma membrane. Post-translationally, acetylation at Lys-167 prevents AIFM2 ubiquitination and degradation, thereby inhibiting ferroptosis. KAT2B mediates acetylation at Lys-167, while HDAC3 removes it. In terms of processing, ubiquitinated. AIFM2 undergoes 'Lys-29'-ubiquitination and proteasomal degradation, which is inhibited by acetylation at Lys-167.

Its subcellular location is the lipid droplet. It localises to the cell membrane. The protein localises to the cytoplasm. It is found in the mitochondrion membrane. The protein resides in the nucleus. The enzyme catalyses ubiquinone-10 + NADH + H(+) = ubiquinol-10 + NAD(+). The catalysed reaction is phylloquinone + NADH + H(+) = phylloquinol + NAD(+). It carries out the reaction menaquinone-4 + NADH + H(+) = menaquinol-4 + NAD(+). It catalyses the reaction menadione + NADH + H(+) = menadiol + NAD(+). Its activity is regulated as follows. The modification by 4-hydroxy-2-nonenal (HNE) adduction in mitochondria results in loss of the oxidoreductase activity and activation of a novel function in mitochondrial oxidative stress signaling. An NAD(P)H-dependent oxidoreductase that acts as a key inhibitor of ferroptosis. At the plasma membrane, catalyzes reduction of coenzyme Q/ubiquinone-10 to ubiquinol-10, a lipophilic radical-trapping antioxidant that prevents lipid oxidative damage and consequently ferroptosis. Acts in parallel to GPX4 to suppress phospholipid peroxidation and ferroptosis. This anti-ferroptotic function is independent of cellular glutathione levels. Also acts as a potent radical-trapping antioxidant by mediating warfarin-resistant vitamin K reduction in the canonical vitamin K cycle: catalyzes NAD(P)H-dependent reduction of vitamin K (phylloquinone, menaquinone-4 and menadione) to hydroquinone forms. Hydroquinones act as potent radical-trapping antioxidants inhibitor of phospholipid peroxidation and ferroptosis. May play a role in mitochondrial stress signaling. Upon oxidative stress, associates with the lipid peroxidation end product 4-hydroxy-2-nonenal (HNE) forming a lipid adduct devoid of oxidoreductase activity, which then translocates from mitochondria into the nucleus triggering DNA damage and cell death. The sequence is that of Ferroptosis suppressor protein 1 (AIFM2) from Taeniopygia guttata (Zebra finch).